Here is a 109-residue protein sequence, read N- to C-terminus: Antifungal protein ginkbilobin-like protein (109 aa).

Residues 4 to 109 (TNFVSSACNT…CFIQYEQHSF (106 aa)) form the Gnk2-homologous domain. 3 disulfides stabilise this stretch: Cys-11/Cys-87, Cys-63/Cys-72, and Cys-75/Cys-100. Asn-12 contributes to the alpha-D-mannopyranose binding site. 2 residues coordinate alpha-D-mannopyranose: Arg-94 and Glu-105.

In terms of biological role, exerts antifungal activity through its carbohydrate-binding specificity. In Picea abies (Norway spruce), this protein is Antifungal protein ginkbilobin-like protein.